The chain runs to 4146 residues: DNA-dependent protein kinase catalytic subunit (4146 aa).

HEAT repeat units follow at residues 308 to 343 (DDYQSLFEVISKWCGHTNGEMKKLAFAALDSFLKQI), 925 to 962 (VIYLDMFLPHITELALSTSDRQTKVAACELLHSIVAFM), 1026 to 1062 (QDTVALLEAILTGIVDPVDSTLRDFCGQCIQEFLRWS), and 1075 to 1111 (PVNTTSLFKRLYSLALHPNAFKRLGAALAFNNIYRDF). 2 TPR repeats span residues 1745–1778 (PMKSDEFPKGTLKFNNYVDCIKKFLDALELSQSP) and 1974–2007 (VFSELKFYQGFLFTEKKEKNLLIFENLIDLQRNY). S2075 carries the post-translational modification Phosphoserine; by autocatalysis. T2631 bears the Phosphothreonine; by autocatalysis mark. S2634 carries the post-translational modification Phosphoserine; by autocatalysis. A phosphothreonine; by autocatalysis mark is found at T2659 and T2668. Residues 2873–3556 (FIACVQDMCY…VYPFMVSGES (684 aa)) enclose the FAT domain. One can recognise a PI3K/PI4K catalytic domain in the interval 3739-4071 (FDERVSVMAS…IHCAKRKLDG (333 aa)). The segment at 3745–3751 (VMASIRK) is G-loop. Residues 3937 to 3945 (GIGDRHLSN) form a catalytic loop region. Residues 3957-3982 (GIDFGHAFGTATQFLPVPELMPFRLT) are activation loop. One can recognise an FATC domain in the interval 4114-4146 (DGLTEETQVQCLIDQATDPNILGRVWKGWEPWI).

This sequence belongs to the PI3/PI4-kinase family. DNA-PK is a heterotrimer of prkdc and the Ku dimer (composed of xrcc6/Ku70 and xrcc5/Ku86). Component of the core long-range non-homologous end joining (NHEJ) complex (also named DNA-PK complex) composed of prkdc, lig4, xrcc4, xrcc6/ku70, xrcc5/ku86 and nhej1/xlf. Additional component of the NHEJ complex includes paxx. Following autophosphorylation, prkdc dissociates from DNA. In terms of processing, autophosphorylated at two clusters, the T2609 cluster and the S2056 cluster. Autophosphorylated on Ser-2075, Thr-2631, Thr-2659 and Thr-2668. Ser-2075 and Thr-2668 are DNA damage-inducible phosphorylation sites (inducible with ionizing radiation, IR) dephosphorylated by PPP5C. Autophosphorylation induces a conformational change that leads to remodeling of the DNA-PK complex, requisite for efficient end processing and DNA repair. Autophosphorylation in trans within DNA-PK complexes loaded on DNA ends leads to the dissociation of PRKDC from DNA and the transition into the short-range NHEJ complex. Autophosphorylation of the T2609 cluster is required for hematopoietic development and protein synthesis in erythrocytes precursors.

The protein resides in the nucleus. It is found in the nucleolus. It carries out the reaction L-seryl-[protein] + ATP = O-phospho-L-seryl-[protein] + ADP + H(+). The catalysed reaction is L-threonyl-[protein] + ATP = O-phospho-L-threonyl-[protein] + ADP + H(+). Serine/threonine-protein kinase that acts as a molecular sensor for DNA damage. Involved in DNA nonhomologous end joining (NHEJ) required for double-strand break (DSB) repair and V(D)J recombination. Must be bound to DNA to express its catalytic properties. Promotes processing of hairpin DNA structures in V(D)J recombination by activation of the hairpin endonuclease artemis (DCLRE1C). Recruited by XRCC5 and XRCC6 to DNA ends and is required to (1) protect and align broken ends of DNA, thereby preventing their degradation, (2) and sequester the DSB for repair by NHEJ. Acts as a scaffold protein to aid the localization of DNA repair proteins to the site of damage. The assembly of the DNA-PK complex at DNA ends is also required for the NHEJ ligation step. Found at the ends of chromosomes, suggesting a further role in the maintenance of telomeric stability and the prevention of chromosomal end fusion. As part of the DNA-PK complex, involved in the early steps of ribosome assembly by promoting the processing of precursor rRNA into mature 18S rRNA in the small-subunit processome. Recognizes the substrate consensus sequence [ST]-Q. Phosphorylates 'Ser-139' of histone variant H2AX, thereby regulating DNA damage response mechanism. The sequence is that of DNA-dependent protein kinase catalytic subunit (prkdc) from Xenopus laevis (African clawed frog).